We begin with the raw amino-acid sequence, 159 residues long: Allergen Arg r 1 (159 aa).

The first 16 residues, 1–16, serve as a signal peptide directing secretion; that stretch reads MALIILLVACLSVVSA. 2 disulfide bridges follow: C50/C155 and C109/C134.

Belongs to the calycin superfamily. Histamine-binding salivary protein family. In terms of processing, not glycosylated.

Its subcellular location is the secreted. This Argas reflexus (European pigeon tick) protein is Allergen Arg r 1.